A 561-amino-acid polypeptide reads, in one-letter code: Bifunctional NAD(P)H-hydrate repair enzyme (561 aa).

The segment at 1-241 (MLSRISERCT…WMIAAERMDA (241 aa)) is NAD(P)H-hydrate epimerase. One can recognise a YjeF N-terminal domain in the interval 29–235 (LRDAEPAAAA…SLGLEEWMIA (207 aa)). An NADPHX 1; for epimerase activity region spans residues 77 to 81 (NNGGD). The K(+) site is built by Asn78 and Asp145. Residues 149–155 (GTGISGP) are NADPHX 1; for epimerase activity. The (6S)-NADPHX site is built by Tyr160 and Asp178. Ser181 contributes to the K(+) binding site. In terms of domain architecture, YjeF C-terminal spans 249-548 (LGDVYGYFST…PRIPFIVNAS (300 aa)). The ADP-dependent (S)-NAD(P)H-hydrate dehydratase stretch occupies residues 249-561 (LGDVYGYFST…SATQQRPSGL (313 aa)). Gly351 lines the (6S)-NADPHX pocket. Residues 417–423 (HPGEAAR) form an NADPHX 2; for dehydratase activity region. ADP-binding positions include 454–458 (KGPGT) and 475–484 (NAGMASGGMG). Asp485 provides a ligand contact to (6S)-NADPHX.

This sequence in the N-terminal section; belongs to the NnrE/AIBP family. The protein in the C-terminal section; belongs to the NnrD/CARKD family. It depends on K(+) as a cofactor.

The enzyme catalyses (6S)-NADHX + ADP = AMP + phosphate + NADH + H(+). It carries out the reaction (6S)-NADPHX + ADP = AMP + phosphate + NADPH + H(+). The catalysed reaction is (6R)-NADHX = (6S)-NADHX. It catalyses the reaction (6R)-NADPHX = (6S)-NADPHX. In terms of biological role, bifunctional enzyme that catalyzes the epimerization of the S- and R-forms of NAD(P)HX and the dehydration of the S-form of NAD(P)HX at the expense of ADP, which is converted to AMP. This allows the repair of both epimers of NAD(P)HX, a damaged form of NAD(P)H that is a result of enzymatic or heat-dependent hydration. This Leishmania braziliensis protein is Bifunctional NAD(P)H-hydrate repair enzyme.